A 276-amino-acid polypeptide reads, in one-letter code: RRP15-like protein (276 aa).

2 disordered regions span residues Met1–Val132 and Lys201–Glu276. Basic and acidic residues-rich tracts occupy residues Phe75–Val95 and Lys226–Thr245. The span at Glu254 to Glu276 shows a compositional bias: acidic residues. Residue Ser269 is modified to Phosphoserine. At Tyr271 the chain carries Phosphotyrosine.

Belongs to the RRP15 family.

The polypeptide is RRP15-like protein (Drosophila melanogaster (Fruit fly)).